Consider the following 450-residue polypeptide: Ribosomal protein uS12 methylthiotransferase RimO (450 aa).

The 116-residue stretch at S10–T125 folds into the MTTase N-terminal domain. 6 residues coordinate [4Fe-4S] cluster: C19, C54, C88, C162, C166, and C169. In terms of domain architecture, Radical SAM core spans S148 to A378. In terms of domain architecture, TRAM spans R381 to S447.

The protein belongs to the methylthiotransferase family. RimO subfamily. The cofactor is [4Fe-4S] cluster.

The protein localises to the cytoplasm. It carries out the reaction L-aspartate(89)-[ribosomal protein uS12]-hydrogen + (sulfur carrier)-SH + AH2 + 2 S-adenosyl-L-methionine = 3-methylsulfanyl-L-aspartate(89)-[ribosomal protein uS12]-hydrogen + (sulfur carrier)-H + 5'-deoxyadenosine + L-methionine + A + S-adenosyl-L-homocysteine + 2 H(+). Its function is as follows. Catalyzes the methylthiolation of an aspartic acid residue of ribosomal protein uS12. In Desulforudis audaxviator (strain MP104C), this protein is Ribosomal protein uS12 methylthiotransferase RimO.